The chain runs to 689 residues: Methionine--tRNA ligase (689 aa).

The short motif at 15–25 (PYANGPIHLGH) is the 'HIGH' region element. Zn(2+) is bound by residues cysteine 146, cysteine 149, cysteine 159, and cysteine 162. Positions 332–336 (KMSKS) match the 'KMSKS' region motif. Residue lysine 335 participates in ATP binding. One can recognise a tRNA-binding domain in the interval 588–689 (DFAKIDLRIA…EGAQPGMRVK (102 aa)).

The protein belongs to the class-I aminoacyl-tRNA synthetase family. MetG type 1 subfamily. Homodimer. Zn(2+) is required as a cofactor.

Its subcellular location is the cytoplasm. The catalysed reaction is tRNA(Met) + L-methionine + ATP = L-methionyl-tRNA(Met) + AMP + diphosphate. Functionally, is required not only for elongation of protein synthesis but also for the initiation of all mRNA translation through initiator tRNA(fMet) aminoacylation. This is Methionine--tRNA ligase from Shewanella baltica (strain OS155 / ATCC BAA-1091).